We begin with the raw amino-acid sequence, 401 residues long: O-methyltransferase SAT18 (401 aa).

Position 249 (D249) interacts with S-adenosyl-L-methionine. The Proton acceptor role is filled by H300.

Belongs to the class I-like SAM-binding methyltransferase superfamily. Cation-independent O-methyltransferase family.

The protein operates within mycotoxin biosynthesis. O-methyltransferase; part of the satratoxin SC3 cluster involved in the biosynthesis of satratoxins, trichothecene mycotoxins that are associated with human food poisonings. Satratoxins are suggested to be made by products of multiple gene clusters (SC1, SC2 and SC3) that encode 21 proteins in all, including polyketide synthases, acetyltransferases, and other enzymes expected to modify the trichothecene skeleton. SC1 encodes 10 proteins, SAT1 to SAT10. The largest are SAT8, which encodes a putative polyketide synthase (PKS) with a conventional non-reducing architecture, and SAT10, a putative protein containing four ankyrin repeats and thus may be involved in protein scaffolding. The putative short-chain reductase SAT3 may assist the PKS in some capacity. SAT6 contains a secretory lipase domain and acts probably as a trichothecene esterase. SAT5 encodes a putative acetyltransferase, and so, with SAT6, may affect endogenous protection from toxicity. The probable transcription factor SAT9 may regulate the expression of the SC1 cluster. SC2 encodes proteins SAT11 to SAT16, the largest of which encodes the putative reducing PKS SAT13. SAT11 is a cytochrome P450 monooxygenase, while SAT14 and SAT16 are probable acetyltransferases. The SC2 cluster may be regulated by the transcription factor SAT15. SC3 is a small cluster that encodes 5 proteins, SAT17 to SAT21. SAT21 is a putative MFS-type transporter which may have a role in exporting secondary metabolites. The four other proteins putatively encoded in SC3 include the taurine hydroxylase-like protein SAT17, the O-methyltransferase SAT18, the acetyltransferase SAT19, and the Cys6-type zinc finger SAT20, the latter being probably involved in regulation of SC3 expression. The protein is O-methyltransferase SAT18 of Stachybotrys chartarum (strain CBS 109288 / IBT 7711) (Toxic black mold).